The primary structure comprises 287 residues: METMRDIKRRINSIKNTQKITKAMKMVAAAKLKKAQLKAENARPFFEKTRSILIDVARRTRQKDIHPLLREKENNRSLFVMITADRGLCGAYNARVIDRVKKLTEKEDEVNFLAVGRKGRDFFGKRGYNIISEYINIDDYPDYSLAGKIGEEIISLFLDDVVDRVVLVYTYFNSAISQEVRDLTLLPLTPPDDKNQEEGKINTEYLYEPSPEAVMDILLPSYIKNILYSALIEAKASEFGARMTAMDAATDNAGELIDKLTLSYNRARQAAITKEITEIVGGAEALK.

Belongs to the ATPase gamma chain family. In terms of assembly, F-type ATPases have 2 components, CF(1) - the catalytic core - and CF(0) - the membrane proton channel. CF(1) has five subunits: alpha(3), beta(3), gamma(1), delta(1), epsilon(1). CF(0) has three main subunits: a, b and c.

The protein resides in the cell membrane. Produces ATP from ADP in the presence of a proton gradient across the membrane. The gamma chain is believed to be important in regulating ATPase activity and the flow of protons through the CF(0) complex. The polypeptide is ATP synthase gamma chain (Halothermothrix orenii (strain H 168 / OCM 544 / DSM 9562)).